The sequence spans 211 residues: Pyridoxine/pyridoxamine 5'-phosphate oxidase (211 aa).

Substrate contacts are provided by residues 7–10 (RREY) and Lys65. FMN-binding positions include 60–65 (RIVLLK), 75–76 (YT), Arg81, Lys82, and Gln104. Residues Tyr122, Arg126, and Ser130 each contribute to the substrate site. Residues 139-140 (QS) and Trp184 each bind FMN. 190 to 192 (RLH) contributes to the substrate binding site. Arg194 contacts FMN.

It belongs to the pyridoxamine 5'-phosphate oxidase family. As to quaternary structure, homodimer. The cofactor is FMN.

The enzyme catalyses pyridoxamine 5'-phosphate + O2 + H2O = pyridoxal 5'-phosphate + H2O2 + NH4(+). It catalyses the reaction pyridoxine 5'-phosphate + O2 = pyridoxal 5'-phosphate + H2O2. It functions in the pathway cofactor metabolism; pyridoxal 5'-phosphate salvage; pyridoxal 5'-phosphate from pyridoxamine 5'-phosphate: step 1/1. The protein operates within cofactor metabolism; pyridoxal 5'-phosphate salvage; pyridoxal 5'-phosphate from pyridoxine 5'-phosphate: step 1/1. Its function is as follows. Catalyzes the oxidation of either pyridoxine 5'-phosphate (PNP) or pyridoxamine 5'-phosphate (PMP) into pyridoxal 5'-phosphate (PLP). The protein is Pyridoxine/pyridoxamine 5'-phosphate oxidase of Vibrio atlanticus (strain LGP32) (Vibrio splendidus (strain Mel32)).